The chain runs to 196 residues: Somatotropin (196 aa).

A signal peptide spans 1–16; sequence MDKVILVLLMSLGASS. Gln-17 bears the Pyrrolidone carboxylic acid mark. Residue His-35 participates in Zn(2+) binding. Cysteines 67 and 169 form a disulfide. Glu-178 is a binding site for Zn(2+). Cysteines 186 and 194 form a disulfide.

This sequence belongs to the somatotropin/prolactin family.

Its subcellular location is the secreted. Its function is as follows. Growth hormone plays an important role in growth control and is involved in the regulation of several anabolic processes. Implicated as an osmoregulatory substance important for seawater adaptation. This Takifugu rubripes (Japanese pufferfish) protein is Somatotropin (gh).